The following is a 142-amino-acid chain: ATP synthase epsilon chain (142 aa).

Belongs to the ATPase epsilon chain family. F-type ATPases have 2 components, CF(1) - the catalytic core - and CF(0) - the membrane proton channel. CF(1) has five subunits: alpha(3), beta(3), gamma(1), delta(1), epsilon(1). CF(0) has three main subunits: a, b and c.

It is found in the cell inner membrane. Its function is as follows. Produces ATP from ADP in the presence of a proton gradient across the membrane. The protein is ATP synthase epsilon chain of Actinobacillus succinogenes (strain ATCC 55618 / DSM 22257 / CCUG 43843 / 130Z).